Consider the following 365-residue polypeptide: tRNA/tmRNA (uracil-C(5))-methyltransferase (365 aa).

Residues glutamine 189, tyrosine 217, asparagine 222, glutamate 238, and aspartate 298 each coordinate S-adenosyl-L-methionine. Cysteine 323 acts as the Nucleophile in catalysis. Glutamate 357 serves as the catalytic Proton acceptor.

It belongs to the class I-like SAM-binding methyltransferase superfamily. RNA M5U methyltransferase family. TrmA subfamily.

It catalyses the reaction uridine(54) in tRNA + S-adenosyl-L-methionine = 5-methyluridine(54) in tRNA + S-adenosyl-L-homocysteine + H(+). The enzyme catalyses uridine(341) in tmRNA + S-adenosyl-L-methionine = 5-methyluridine(341) in tmRNA + S-adenosyl-L-homocysteine + H(+). Dual-specificity methyltransferase that catalyzes the formation of 5-methyluridine at position 54 (m5U54) in all tRNAs, and that of position 341 (m5U341) in tmRNA (transfer-mRNA). This Shewanella woodyi (strain ATCC 51908 / MS32) protein is tRNA/tmRNA (uracil-C(5))-methyltransferase.